The chain runs to 337 residues: Phenylalanine--tRNA ligase alpha subunit (337 aa).

Glutamate 252 serves as a coordination point for Mg(2+).

Belongs to the class-II aminoacyl-tRNA synthetase family. Phe-tRNA synthetase alpha subunit type 1 subfamily. Tetramer of two alpha and two beta subunits. Mg(2+) serves as cofactor.

It is found in the cytoplasm. It catalyses the reaction tRNA(Phe) + L-phenylalanine + ATP = L-phenylalanyl-tRNA(Phe) + AMP + diphosphate + H(+). This chain is Phenylalanine--tRNA ligase alpha subunit, found in Francisella tularensis subsp. tularensis (strain SCHU S4 / Schu 4).